Here is a 571-residue protein sequence, read N- to C-terminus: Protein dead ringer homolog (571 aa).

Disordered regions lie at residues 45–117 and 190–229; these read QHQQ…EPDK and KRMQ…SCNG. Over residues 49–77 the composition is skewed to basic and acidic residues; that stretch reads RMMEQHKNDDVISNDVRCDDFSDGGERQR. A compositionally biased stretch (polar residues) spans 195–206; sequence DHNIQQSTNHIP. Positions 207-224 are enriched in low complexity; sequence TPSSASSHTSSGSVTSQT. The ARID domain occupies 249–341; sequence DIKRKEFLDD…YLYPFECERE (93 aa). The segment covering 459 to 471 has biased composition (low complexity); that stretch reads AAHHAAQQAAQHQ. The disordered stretch occupies residues 459–528; the sequence is AAHHAAQQAA…GDRGRHNEMS (70 aa). Residues 473–558 enclose the REKLES domain; the sequence is SLKKEIDSDY…GVLFAHSPNH (86 aa). Basic and acidic residues-rich tracts occupy residues 487-507 and 518-527; these read PPEK…DNQR and MGDRGRHNEM.

Its subcellular location is the nucleus. In terms of biological role, transcription factor. This is Protein dead ringer homolog (Ci-DRIL1/2) from Ciona intestinalis (Transparent sea squirt).